Reading from the N-terminus, the 221-residue chain is GTP-binding nuclear protein Ran/TC4 (221 aa).

Residues 10-174 enclose the Small GTPase Ran-type domain; it reads DYPSFKLVIV…LYLARKLAGD (165 aa). Position 21 to 28 (21 to 28) interacts with GTP; that stretch reads DGGTGKTT. The tract at residues 40 to 48 is switch-I; that stretch reads KKYEPTIGV. GTP is bound by residues Gly-71, 125 to 128, and 153 to 155; these read NKVD and SAK. The tract at residues 71–87 is switch-II; sequence GQEKFGGLRDGYYIHGQ.

It belongs to the small GTPase superfamily. Ran family. In terms of assembly, found in a nuclear export complex with RanGTP, exportin and pre-miRNA.

It is found in the nucleus. In terms of biological role, GTP-binding protein involved in nucleocytoplasmic transport. Required for the import of protein into the nucleus and also for RNA export. Involved in chromatin condensation and control of cell cycle. The sequence is that of GTP-binding nuclear protein Ran/TC4 from Vicia faba (Broad bean).